Reading from the N-terminus, the 158-residue chain is Regulator of sigma D (158 aa).

This sequence belongs to the Rsd/AlgQ family. In terms of assembly, interacts with RpoD.

The protein resides in the cytoplasm. Its function is as follows. Binds RpoD and negatively regulates RpoD-mediated transcription activation by preventing the interaction between the primary sigma factor RpoD with the catalytic core of the RNA polymerase and with promoter DNA. May be involved in replacement of the RNA polymerase sigma subunit from RpoD to RpoS during the transition from exponential growth to the stationary phase. The protein is Regulator of sigma D of Escherichia coli (strain UTI89 / UPEC).